A 622-amino-acid chain; its full sequence is MSFKVNWNSLETEPLTNWTKELLTSALNSGKSPNILASNITIKDLNFGKIAPDFEILEIGELDRDRFRGIFKIDYQGDFHLTLHTKVQANPLNIYYHNSLEKEVCNYSQDEFITPNFLLSNEQFAIPLDLKLSDIKINGIGIIVFSKSKGLTLVFRNDPLDSIKVSSTFDTVQVLANFLQKQIENQIRDLFRETLPTLIHQLSLKYLSLDNNINEIKSKLSQQDSVSMTNNELASSLKLFDDEENEFPLIYSSKNLQKNMQLFKSRETFRLSVPKFKNIVQRTRLDKFTKSYPNLLNSLYANNADLQHRFVNNINHGHNNNSNTSSNGIPIELLVSHDDKQHYDKTDDLLKDISSIQANNFYKYSNKDAPNKPKRRRIKVHKKSKAKQDDNTVKASELQNVDSTFMDSRSISPQETIDTTSTLIESAPMTRNVSTNIKSPTLETMSTGSSSSASSQVIAHPTPKRAYQPADTTVSTTTINKENHIDYIKARNLYQDFIQMSQSPGYYDKVISNGGGIGLGNSGGNYFGFNGNGNGLERTMSASPIKHLNKDKKSINYIDTSKINEKLNQFRLDGGKNSANTNNSSGGKNFRPGFTRNESNGQQGILFEAFNFPSVAPPPPYC.

The SMP-LTD domain maps to 1–204; the sequence is MSFKVNWNSL…LPTLIHQLSL (204 aa). Disordered regions lie at residues 364-393, 442-468, and 572-592; these read YSNK…DNTV, LETM…RAYQ, and LDGG…NFRP. Over residues 372–385 the composition is skewed to basic residues; sequence KPKRRRIKVHKKSK. The span at 446–455 shows a compositional bias: low complexity; that stretch reads STGSSSSASS. Over residues 577–587 the composition is skewed to polar residues; it reads NSANTNNSSGG.

The protein belongs to the MDM34 family. Component of the ER-mitochondria encounter structure (ERMES) or MDM complex, composed of MMM1, MDM10, MDM12 and MDM34.

Its subcellular location is the mitochondrion outer membrane. Its function is as follows. Component of the ERMES/MDM complex, which serves as a molecular tether to connect the endoplasmic reticulum (ER) and mitochondria. Components of this complex are involved in the control of mitochondrial shape and protein biogenesis, and function in nonvesicular lipid trafficking between the ER and mitochondria. MDM34 is required for the interaction of the ER-resident membrane protein MMM1 and the outer mitochondrial membrane-resident beta-barrel protein MDM10. The protein is Mitochondrial distribution and morphology protein 34 of Candida albicans (strain WO-1) (Yeast).